The following is a 334-amino-acid chain: Leucine-rich repeat-containing protein 26 (334 aa).

A signal peptide spans 1-26 (MRGPSWSRPRPLLLLLLLLSPWPVWA). Residues 27–261 (QVSATASPSG…HCAQPLALRD (235 aa)) are Extracellular-facing. Residues 34 to 71 (PSGSLGAPDCPEVCTCVPGGLASCSALSLPAVPPGLSL) enclose the LRRNT domain. Cystine bridges form between C43/C49 and C47/C57. 5 LRR repeats span residues 72 to 93 (RLRA…AFAG), 96 to 117 (ALQR…AFWG), 120 to 141 (ALQL…TFAP), 144 to 167 (ALRN…GALP), and 168 to 190 (LLRS…LGRL). N147 carries an N-linked (GlcNAc...) asparagine glycan. One can recognise an LRRCT domain in the interval 201-255 (NPWGCGCALRPLCAWLRRHPLPASEAETVLCVWPGRLTLSPLTAFSDAAFSHCAQ). 2 disulfides stabilise this stretch: C205-C231 and C207-C253. Residues 262–282 (LAVVYTLGPASFLVSLASCLA) traverse the membrane as a helical segment. Topologically, residues 283–334 (LGSGLTACRARRRRLRTAALRPPRPPDPNPDPDPHGCASPADPGSPAAAAQA) are cytoplasmic. Residues 298 to 334 (RTAALRPPRPPDPNPDPDPHGCASPADPGSPAAAAQA) are disordered. Positions 304 to 313 (PPRPPDPNPD) are enriched in pro residues. A compositionally biased stretch (low complexity) spans 320–334 (ASPADPGSPAAAAQA).

As to quaternary structure, interacts with KCNMA1. In terms of tissue distribution, isoform 1 is expressed highly in normal prostate and salivary gland, very weakly in colon, pancreas, and intestine, and not at all in other tissues. Isoform 1 is expressed highly in many cancer cell lines and in breast cancer, pancreatic cancer and colon cancer. Isoform 2 is expressed in cancer cell lines.

It is found in the cell membrane. It localises to the cytoplasm. The protein localises to the cytoskeleton. Its function is as follows. Auxiliary protein of the large-conductance, voltage and calcium-activated potassium channel (BK alpha). Required for the conversion of BK alpha channels from a high-voltage to a low-voltage activated channel type in non-excitable cells. These are characterized by negative membrane voltages and constant low levels of calcium. The polypeptide is Leucine-rich repeat-containing protein 26 (LRRC26) (Homo sapiens (Human)).